Consider the following 506-residue polypeptide: FAD-linked oxidoreductase chry5 (506 aa).

An N-terminal signal peptide occupies residues 1–17 (MHLQALTGLATLAVTAA). Residues 59 to 241 (LDKPTVNIVA…TSVTSKTYDA (183 aa)) form the FAD-binding PCMH-type domain. 5 N-linked (GlcNAc...) asparagine glycosylation sites follow: N205, N272, N281, N389, and N431.

This sequence belongs to the oxygen-dependent FAD-linked oxidoreductase family. The cofactor is FAD.

It participates in pigment biosynthesis. In terms of biological role, FAD-linked oxidoreductase; part of the gene cluster that mediates the biosynthesis of the yellow pigment chrysogine. Pyruvic acid and anthranilic acid are likely substrates for the nonribosomal peptide synthetase chry1/NRPS14, with pyruvic acid adenylated by the first A domain and anthranilic acid by the second. If pyruvic acid and anthranilic acid are merged and released from chry1/NRPS14 by hydrolysis, a subsequent amidation would lead to 2-pyruvoylaminobenzamide. This process is probably catalyzed by the amidotransferase chry2 using glutamine as amino donor. The dehydrogenase chry5 that has a terminal berberine bridge domain for C-N cyclization could catalyze the cyclization of 2-pyruvoylaminobenzamide to yield acetyl-4(3H)-quinazolidinone. A final reduction of acetyl-4(3H)-quinazolidinone catalyzed by the oxidoreductase chry4 would result in chrysogine. The polypeptide is FAD-linked oxidoreductase chry5 (Gibberella zeae (strain ATCC MYA-4620 / CBS 123657 / FGSC 9075 / NRRL 31084 / PH-1) (Wheat head blight fungus)).